Reading from the N-terminus, the 314-residue chain is Methionyl-tRNA formyltransferase (314 aa).

A (6S)-5,6,7,8-tetrahydrofolate-binding site is contributed by 112 to 115 (SLLP).

It belongs to the Fmt family.

The enzyme catalyses L-methionyl-tRNA(fMet) + (6R)-10-formyltetrahydrofolate = N-formyl-L-methionyl-tRNA(fMet) + (6S)-5,6,7,8-tetrahydrofolate + H(+). Its function is as follows. Attaches a formyl group to the free amino group of methionyl-tRNA(fMet). The formyl group appears to play a dual role in the initiator identity of N-formylmethionyl-tRNA by promoting its recognition by IF2 and preventing the misappropriation of this tRNA by the elongation apparatus. This chain is Methionyl-tRNA formyltransferase, found in Legionella pneumophila (strain Corby).